We begin with the raw amino-acid sequence, 115 residues long: U17-barytoxin-Tl1c (115 aa).

An N-terminal signal peptide occupies residues 1–20; that stretch reads MKTIIVFLSLLVLATKFGDA. Positions 21-74 are excised as a propeptide; sequence KEGVNQKQKKEVTQNEFREEYLNEMAAMSLVQQLEAIERALFENEAGRNSRQKR. Cystine bridges form between Cys75–Cys89, Cys82–Cys94, and Cys88–Cys109.

It belongs to the neurotoxin 14 (magi-1) family. 03 (ICK-30-40) subfamily. In terms of tissue distribution, expressed by the venom gland.

It is found in the secreted. In terms of biological role, ion channel inhibitor. The polypeptide is U17-barytoxin-Tl1c (Trittame loki (Brush-footed trapdoor spider)).